Consider the following 173-residue polypeptide: Protein GrpE (173 aa).

The protein belongs to the GrpE family. Homodimer.

The protein localises to the cytoplasm. Its function is as follows. Participates actively in the response to hyperosmotic and heat shock by preventing the aggregation of stress-denatured proteins, in association with DnaK and GrpE. It is the nucleotide exchange factor for DnaK and may function as a thermosensor. Unfolded proteins bind initially to DnaJ; upon interaction with the DnaJ-bound protein, DnaK hydrolyzes its bound ATP, resulting in the formation of a stable complex. GrpE releases ADP from DnaK; ATP binding to DnaK triggers the release of the substrate protein, thus completing the reaction cycle. Several rounds of ATP-dependent interactions between DnaJ, DnaK and GrpE are required for fully efficient folding. This Campylobacter fetus subsp. fetus (strain 82-40) protein is Protein GrpE.